The chain runs to 393 residues: Epoxyqueuosine reductase (393 aa).

Residue Asp154 is the Proton donor of the active site. Residues 196–228 (LPLPVDIPVQEGCHSCVACITSCPTGAIVEPYT) form the 4Fe-4S ferredoxin-type domain. [4Fe-4S] cluster contacts are provided by Cys208, Cys211, Cys214, Cys218, Cys234, Cys261, Cys264, and Cys268.

It belongs to the QueG family. In terms of assembly, monomer. Requires cob(II)alamin as cofactor. It depends on [4Fe-4S] cluster as a cofactor.

Its subcellular location is the cytoplasm. It carries out the reaction epoxyqueuosine(34) in tRNA + AH2 = queuosine(34) in tRNA + A + H2O. The protein operates within tRNA modification; tRNA-queuosine biosynthesis. Its function is as follows. Catalyzes the conversion of epoxyqueuosine (oQ) to queuosine (Q), which is a hypermodified base found in the wobble positions of tRNA(Asp), tRNA(Asn), tRNA(His) and tRNA(Tyr). This chain is Epoxyqueuosine reductase, found in Shewanella oneidensis (strain ATCC 700550 / JCM 31522 / CIP 106686 / LMG 19005 / NCIMB 14063 / MR-1).